Reading from the N-terminus, the 157-residue chain is Cyclic pyranopterin monophosphate synthase (157 aa).

Substrate contacts are provided by residues 74-76 (MCH) and 112-113 (ME). Asp127 is an active-site residue.

It belongs to the MoaC family. In terms of assembly, homohexamer; trimer of dimers.

It catalyses the reaction (8S)-3',8-cyclo-7,8-dihydroguanosine 5'-triphosphate = cyclic pyranopterin phosphate + diphosphate. It functions in the pathway cofactor biosynthesis; molybdopterin biosynthesis. Catalyzes the conversion of (8S)-3',8-cyclo-7,8-dihydroguanosine 5'-triphosphate to cyclic pyranopterin monophosphate (cPMP). In Campylobacter jejuni subsp. jejuni serotype O:2 (strain ATCC 700819 / NCTC 11168), this protein is Cyclic pyranopterin monophosphate synthase.